The chain runs to 349 residues: Protein-glutamate methylesterase/protein-glutamine glutaminase (349 aa).

Residues 5–122 (RVLSVDDSAL…REGMLAYSEM (118 aa)) enclose the Response regulatory domain. D56 carries the post-translational modification 4-aspartylphosphate. One can recognise a CheB-type methylesterase domain in the interval 152 to 344 (LLSSEKLIAI…QQMLAKISAG (193 aa)). Active-site residues include S164, H190, and D286.

The protein belongs to the CheB family. Post-translationally, phosphorylated by CheA. Phosphorylation of the N-terminal regulatory domain activates the methylesterase activity.

It localises to the cytoplasm. The enzyme catalyses [protein]-L-glutamate 5-O-methyl ester + H2O = L-glutamyl-[protein] + methanol + H(+). It catalyses the reaction L-glutaminyl-[protein] + H2O = L-glutamyl-[protein] + NH4(+). In terms of biological role, involved in chemotaxis. Part of a chemotaxis signal transduction system that modulates chemotaxis in response to various stimuli. Catalyzes the demethylation of specific methylglutamate residues introduced into the chemoreceptors (methyl-accepting chemotaxis proteins or MCP) by CheR. Also mediates the irreversible deamidation of specific glutamine residues to glutamic acid. In Escherichia coli O157:H7, this protein is Protein-glutamate methylesterase/protein-glutamine glutaminase.